A 312-amino-acid chain; its full sequence is Malate dehydrogenase (312 aa).

Residues 12 to 17 and Asp36 contribute to the NAD(+) site; that span reads GAGFTG. Substrate is bound by residues Arg87 and Arg93. Residues Asn100 and 123–125 each bind NAD(+); that span reads LTN. Asn125 is a binding site for substrate. Ser149 is modified (phosphoserine). Arg156 serves as a coordination point for substrate. His180 acts as the Proton acceptor in catalysis.

Belongs to the LDH/MDH superfamily. MDH type 3 family.

The enzyme catalyses (S)-malate + NAD(+) = oxaloacetate + NADH + H(+). In terms of biological role, catalyzes the reversible oxidation of malate to oxaloacetate. In Anoxybacillus flavithermus (strain DSM 21510 / WK1), this protein is Malate dehydrogenase.